A 207-amino-acid polypeptide reads, in one-letter code: LexA repressor (207 aa).

Positions 28–48 form a DNA-binding region, H-T-H motif; it reads VREIGEAVGLASSSTVHGHLA. Active-site for autocatalytic cleavage activity residues include Ser-129 and Lys-167.

Belongs to the peptidase S24 family. Homodimer.

The catalysed reaction is Hydrolysis of Ala-|-Gly bond in repressor LexA.. Functionally, represses a number of genes involved in the response to DNA damage (SOS response), including recA and lexA. In the presence of single-stranded DNA, RecA interacts with LexA causing an autocatalytic cleavage which disrupts the DNA-binding part of LexA, leading to derepression of the SOS regulon and eventually DNA repair. This Geobacillus sp. (strain WCH70) protein is LexA repressor.